The following is a 386-amino-acid chain: Cytochrome b (386 aa).

Transmembrane regions (helical) follow at residues 39–59, 83–104, 119–139, and 184–204; these read FGSL…FLAM, FMLK…YIHM, WNIG…GYVL, and FFSL…LHIL. Residues H89 and H103 each coordinate heme b. The heme b site is built by H188 and H202. H207 is an a ubiquinone binding site. Helical transmembrane passes span 232–252, 294–314, 326–346, and 353–374; these read YKDL…CYFM, LGGV…PFIH, LGKI…WLGA, and YIMI…LVPL.

It belongs to the cytochrome b family. The main subunits of complex b-c1 are: cytochrome b, cytochrome c1 and the Rieske protein. Heme b is required as a cofactor.

The protein localises to the mitochondrion inner membrane. Its function is as follows. Component of the ubiquinol-cytochrome c reductase complex (complex III or cytochrome b-c1 complex) that is part of the mitochondrial respiratory chain. The b-c1 complex mediates electron transfer from ubiquinol to cytochrome c. Contributes to the generation of a proton gradient across the mitochondrial membrane that is then used for ATP synthesis. The sequence is that of Cytochrome b (MT-CYB) from Sarcophyton glaucum (Toadstool umbrella leather coral).